The chain runs to 484 residues: Glutamate--tRNA ligase (484 aa).

A 'HIGH' region motif is present at residues 11-21 (PSPTGYLHIGN). A 'KMSKS' region motif is present at residues 252–256 (KLSKR). K255 provides a ligand contact to ATP.

This sequence belongs to the class-I aminoacyl-tRNA synthetase family. Glutamate--tRNA ligase type 1 subfamily. Monomer.

The protein resides in the cytoplasm. The enzyme catalyses tRNA(Glu) + L-glutamate + ATP = L-glutamyl-tRNA(Glu) + AMP + diphosphate. Its function is as follows. Catalyzes the attachment of glutamate to tRNA(Glu) in a two-step reaction: glutamate is first activated by ATP to form Glu-AMP and then transferred to the acceptor end of tRNA(Glu). In Staphylococcus aureus (strain Newman), this protein is Glutamate--tRNA ligase.